Consider the following 177-residue polypeptide: Transcriptional regulator MET31 (177 aa).

A C2H2-type zinc finger spans residues 95–117 (YSCAKCQLKFSRSSDLRRHEKVH).

Interacts with MET4 and MET28.

The protein localises to the cytoplasm. Its subcellular location is the nucleus. Its function is as follows. Auxiliary transcriptional regulator of sulfur amino acid metabolism. Involved in the transcriptional activation of MET28. This is Transcriptional regulator MET31 (MET31) from Saccharomyces cerevisiae (strain ATCC 204508 / S288c) (Baker's yeast).